The chain runs to 616 residues: Dihydroxy-acid dehydratase (616 aa).

Residue Asp81 participates in Mg(2+) binding. Cys122 is a binding site for [2Fe-2S] cluster. Mg(2+) contacts are provided by Asp123 and Lys124. Lys124 bears the N6-carboxylysine mark. Cys195 lines the [2Fe-2S] cluster pocket. A Mg(2+)-binding site is contributed by Glu491. Residue Ser517 is the Proton acceptor of the active site.

It belongs to the IlvD/Edd family. As to quaternary structure, homodimer. The cofactor is [2Fe-2S] cluster. Requires Mg(2+) as cofactor.

The catalysed reaction is (2R)-2,3-dihydroxy-3-methylbutanoate = 3-methyl-2-oxobutanoate + H2O. The enzyme catalyses (2R,3R)-2,3-dihydroxy-3-methylpentanoate = (S)-3-methyl-2-oxopentanoate + H2O. The protein operates within amino-acid biosynthesis; L-isoleucine biosynthesis; L-isoleucine from 2-oxobutanoate: step 3/4. Its pathway is amino-acid biosynthesis; L-valine biosynthesis; L-valine from pyruvate: step 3/4. In terms of biological role, functions in the biosynthesis of branched-chain amino acids. Catalyzes the dehydration of (2R,3R)-2,3-dihydroxy-3-methylpentanoate (2,3-dihydroxy-3-methylvalerate) into 2-oxo-3-methylpentanoate (2-oxo-3-methylvalerate) and of (2R)-2,3-dihydroxy-3-methylbutanoate (2,3-dihydroxyisovalerate) into 2-oxo-3-methylbutanoate (2-oxoisovalerate), the penultimate precursor to L-isoleucine and L-valine, respectively. This Yersinia pseudotuberculosis serotype O:1b (strain IP 31758) protein is Dihydroxy-acid dehydratase.